The following is a 185-amino-acid chain: Protein GrpE (185 aa).

The tract at residues 1 to 37 is disordered; the sequence is MEEQEEKQYNQNIQDNEEGTQMREELQESTSAQQTLQ. Positions 28-37 are enriched in polar residues; the sequence is ESTSAQQTLQ.

The protein belongs to the GrpE family. As to quaternary structure, homodimer.

It localises to the cytoplasm. Its function is as follows. Participates actively in the response to hyperosmotic and heat shock by preventing the aggregation of stress-denatured proteins, in association with DnaK and GrpE. It is the nucleotide exchange factor for DnaK and may function as a thermosensor. Unfolded proteins bind initially to DnaJ; upon interaction with the DnaJ-bound protein, DnaK hydrolyzes its bound ATP, resulting in the formation of a stable complex. GrpE releases ADP from DnaK; ATP binding to DnaK triggers the release of the substrate protein, thus completing the reaction cycle. Several rounds of ATP-dependent interactions between DnaJ, DnaK and GrpE are required for fully efficient folding. This is Protein GrpE from Helicobacter hepaticus (strain ATCC 51449 / 3B1).